Consider the following 96-residue polypeptide: Putative pterin-4-alpha-carbinolamine dehydratase (96 aa).

The protein belongs to the pterin-4-alpha-carbinolamine dehydratase family.

The catalysed reaction is (4aS,6R)-4a-hydroxy-L-erythro-5,6,7,8-tetrahydrobiopterin = (6R)-L-erythro-6,7-dihydrobiopterin + H2O. This is Putative pterin-4-alpha-carbinolamine dehydratase from Brucella anthropi (strain ATCC 49188 / DSM 6882 / CCUG 24695 / JCM 21032 / LMG 3331 / NBRC 15819 / NCTC 12168 / Alc 37) (Ochrobactrum anthropi).